Consider the following 402-residue polypeptide: MEAHEIIEEPHITMDAEKHPPSKDPSAEDLQENHISESFLKPSTSETPLEPHTSESPLVPSPSQIPLEAHSPETHQEPSISETPSETPTYEASLDSPISVVPEKHLTLPPQSRDYVCLSSSDTLKEDLSSESSSNEVPWTRRSTHLSESESLPEHCLSGPSSQVQVDTTEKQEEEAGEVEKGVDASDSTAHTAQPGHQLGNTARPVFPARQTELVEVAKAMHREEFGAQVNNLFQWEKDAALNAIQTGLYIGWRCPHYLWDCFRIGDESRCFCGHLLREHRIISDISVPCKVSQCRCFMFCFIPSRPEEVGEFWLKRRATFDPKAWRAQCRCKHSHEEHAATGPHPCRHHGCCCGCFESNFLCAACDRRWEEHETFFDTQKTRQRGGRPRGTDTVSNWHRPL.

The segment covering 1–35 (MEAHEIIEEPHITMDAEKHPPSKDPSAEDLQENHI) has biased composition (basic and acidic residues). Disordered stretches follow at residues 1-205 (MEAH…TARP) and 378-402 (DTQK…HRPL). Composition is skewed to polar residues over residues 77–90 (EPSI…TPTY) and 393–402 (DTVSNWHRPL).

It belongs to the FAM221 family.

This is Protein FAM221B (FAM221B) from Homo sapiens (Human).